The following is a 285-amino-acid chain: 2-dehydro-3-deoxyphosphooctonate aldolase (285 aa).

The protein belongs to the KdsA family.

The protein localises to the cytoplasm. The enzyme catalyses D-arabinose 5-phosphate + phosphoenolpyruvate + H2O = 3-deoxy-alpha-D-manno-2-octulosonate-8-phosphate + phosphate. The protein operates within carbohydrate biosynthesis; 3-deoxy-D-manno-octulosonate biosynthesis; 3-deoxy-D-manno-octulosonate from D-ribulose 5-phosphate: step 2/3. Its pathway is bacterial outer membrane biogenesis; lipopolysaccharide biosynthesis. The protein is 2-dehydro-3-deoxyphosphooctonate aldolase of Albidiferax ferrireducens (strain ATCC BAA-621 / DSM 15236 / T118) (Rhodoferax ferrireducens).